The sequence spans 295 residues: Small ribosomal subunit biogenesis GTPase RsgA (295 aa).

Residues 68-228 (KNLLTKPHVA…VVDTPGFANL (161 aa)) enclose the CP-type G domain. GTP-binding positions include 117-120 (NKMD) and 170-178 (GLSGVGKSS). The Zn(2+) site is built by Cys-250, Cys-255, His-257, and Cys-263.

It belongs to the TRAFAC class YlqF/YawG GTPase family. RsgA subfamily. Monomer. Associates with 30S ribosomal subunit, binds 16S rRNA. It depends on Zn(2+) as a cofactor.

The protein resides in the cytoplasm. Functionally, one of several proteins that assist in the late maturation steps of the functional core of the 30S ribosomal subunit. Helps release RbfA from mature subunits. May play a role in the assembly of ribosomal proteins into the subunit. Circularly permuted GTPase that catalyzes slow GTP hydrolysis, GTPase activity is stimulated by the 30S ribosomal subunit. This is Small ribosomal subunit biogenesis GTPase RsgA from Thermotoga maritima (strain ATCC 43589 / DSM 3109 / JCM 10099 / NBRC 100826 / MSB8).